The primary structure comprises 579 residues: Arginine--tRNA ligase (579 aa).

A 'HIGH' region motif is present at residues 123–133 (PNLAKEMHVGH).

Belongs to the class-I aminoacyl-tRNA synthetase family. In terms of assembly, monomer.

The protein localises to the cytoplasm. The enzyme catalyses tRNA(Arg) + L-arginine + ATP = L-arginyl-tRNA(Arg) + AMP + diphosphate. The sequence is that of Arginine--tRNA ligase from Cellvibrio japonicus (strain Ueda107) (Pseudomonas fluorescens subsp. cellulosa).